We begin with the raw amino-acid sequence, 163 residues long: NADH-quinone oxidoreductase subunit I (163 aa).

2 consecutive 4Fe-4S ferredoxin-type domains span residues 54–84 and 94–123; these read LRRY…IESD and TRYD…ETQI. Residues Cys-64, Cys-67, Cys-70, Cys-74, Cys-103, Cys-106, Cys-109, and Cys-113 each contribute to the [4Fe-4S] cluster site.

This sequence belongs to the complex I 23 kDa subunit family. NDH-1 is composed of 14 different subunits. Subunits NuoA, H, J, K, L, M, N constitute the membrane sector of the complex. Requires [4Fe-4S] cluster as cofactor.

It localises to the cell inner membrane. The catalysed reaction is a quinone + NADH + 5 H(+)(in) = a quinol + NAD(+) + 4 H(+)(out). NDH-1 shuttles electrons from NADH, via FMN and iron-sulfur (Fe-S) centers, to quinones in the respiratory chain. The immediate electron acceptor for the enzyme in this species is believed to be ubiquinone. Couples the redox reaction to proton translocation (for every two electrons transferred, four hydrogen ions are translocated across the cytoplasmic membrane), and thus conserves the redox energy in a proton gradient. The sequence is that of NADH-quinone oxidoreductase subunit I from Cupriavidus necator (strain ATCC 17699 / DSM 428 / KCTC 22496 / NCIMB 10442 / H16 / Stanier 337) (Ralstonia eutropha).